The following is a 257-amino-acid chain: Pantothenate synthetase (257 aa).

Position 29 to 36 (29 to 36 (MGNLHAGH)) interacts with ATP. H36 functions as the Proton donor in the catalytic mechanism. Q60 is a (R)-pantoate binding site. A beta-alanine-binding site is contributed by Q60. Position 145-148 (145-148 (GEKD)) interacts with ATP. Q151 serves as a coordination point for (R)-pantoate. Residues V174 and 182-185 (LSSR) each bind ATP.

Belongs to the pantothenate synthetase family. As to quaternary structure, homodimer.

The protein localises to the cytoplasm. It catalyses the reaction (R)-pantoate + beta-alanine + ATP = (R)-pantothenate + AMP + diphosphate + H(+). Its pathway is cofactor biosynthesis; (R)-pantothenate biosynthesis; (R)-pantothenate from (R)-pantoate and beta-alanine: step 1/1. Its function is as follows. Catalyzes the condensation of pantoate with beta-alanine in an ATP-dependent reaction via a pantoyl-adenylate intermediate. This chain is Pantothenate synthetase, found in Coxiella burnetii (strain Dugway 5J108-111).